The primary structure comprises 551 residues: E3 ubiquitin-protein ligase HEL1 (551 aa).

The TRIAD supradomain stretch occupies residues 175-388 (NDFTCIICCD…KNFFQCTMYK (214 aa)). Zn(2+) is bound by residues C179, C182, C200, C203, C301, C304, H309, C314, C341, and C344. The RING-type 1 zinc-finger motif lies at 179–225 (CIICCDKKDTETFALECGHEYCINCYRHYIKDKLHEGNIITCMDCSL). Residues 242-314 (SKLMDSSIKS…GFEVHSPADC (73 aa)) form an IBR-type zinc finger. The RING-type 2; atypical zinc-finger motif lies at 341-370 (CPKCSVNIEKNGGCNHMVCSSCKYEFCWIC). Residue C354 is part of the active site. 6 residues coordinate Zn(2+): C359, C362, C367, C370, H377, and C384.

Belongs to the RBR family. As to quaternary structure, interacts with the E2 ubiquitin-conjugating enzyme UBC4 and histones H3 and H4.

It carries out the reaction [E2 ubiquitin-conjugating enzyme]-S-ubiquitinyl-L-cysteine + [acceptor protein]-L-lysine = [E2 ubiquitin-conjugating enzyme]-L-cysteine + [acceptor protein]-N(6)-ubiquitinyl-L-lysine.. Its pathway is protein modification; protein ubiquitination. Its function is as follows. Probable ubiquitin-protein ligase involved in the degradation-related ubiquitination of histones. Contributes to the post-translational regulation of histone protein levels by polyubiquitination of excess histones for subsequent degradation. The chain is E3 ubiquitin-protein ligase HEL1 from Saccharomyces cerevisiae (strain ATCC 204508 / S288c) (Baker's yeast).